The sequence spans 522 residues: Semenogelin-2 (522 aa).

An N-terminal signal peptide occupies residues 1–23 (MKSIILFVLSLLLILEKQAAVMG). 4 disordered regions span residues 26–62 (CGSKGQLPSGSSQFPRGQKGQHYSGQKDEQHTKSKGS), 132–158 (GGQAHRGTQNPSQDQGNSPSGKGISSQ), 272–358 (NLNQ…ERHL), and 379–522 (EEQI…PVST). 2 stretches are compositionally biased toward polar residues: residues 31-40 (QLPSGSSQFP) and 137-158 (RGTQNPSQDQGNSPSGKGISSQ). Residues 292 to 310 (RTEERQLNRGEKSVQKDVS) are compositionally biased toward basic and acidic residues. Residues 325–335 (KSQNQVTIHSQ) show a composition bias toward polar residues. Residues 336–345 (GQEHGHKENK) show a composition bias toward basic and acidic residues. Composition is skewed to polar residues over residues 379–397 (EEQIHGKSQNQVRIPSQAQ), 427–436 (KDVSQSSTSF), and 446–464 (SQIQTPNPNQDQWSVQNAK). Basic and acidic residues-rich tracts occupy residues 465–492 (GKSDQSAGREQDLLSHEQKGRHQQESSE) and 499–522 (TEHEVAYDDHLTQQYNEDRNPVST).

This sequence belongs to the semenogelin family. As to quaternary structure, interacts with SERPINA5.

The protein resides in the secreted. Its function is as follows. Participates in the formation of a gel matrix (sperm coagulum) entrapping the accessory gland secretions and ejaculated spermatozoa. The polypeptide is Semenogelin-2 (SEMG2) (Hylobates klossii (Kloss's gibbon)).